Reading from the N-terminus, the 718-residue chain is Scarecrow-like protein 9 (718 aa).

The interval 305 to 338 is disordered; the sequence is VEKKKASDAQGGKRRARGRGRGRGRGGGGGQNGK. A compositionally biased stretch (basic residues) spans 316 to 328; sequence GKRRARGRGRGRG. The region spanning 335–713 is the GRAS domain; it reads QNGKKEVVDL…RTVMALSVWK (379 aa). Residues 342-402 are leucine repeat I (LRI); the sequence is VDLRSLLIHC…EARLAGTGSQ (61 aa). Positions 421 to 484 are VHIID; that stretch reads HQLFLACCPF…YGSPKVRITG (64 aa). Positions 452 to 456 match the VHIID motif; the sequence is VHVID. Residues 500-532 form a leucine repeat II (LRII) region; it reads ETGQRLAAYAKLFGVPFEYKAIAKKWDAIQLED. Residues 541–635 are PFYRE; the sequence is TVVNCLYRAE…MEVFGREALN (95 aa). The interval 638–713 is SAW; that stretch reads ACEGWERVER…RTVMALSVWK (76 aa).

Belongs to the GRAS family. In terms of tissue distribution, expressed in cotyledons, leaves and flowers, and in the elongation zone in root.

Its subcellular location is the nucleus. In terms of biological role, probable transcription factor involved in plant development. The protein is Scarecrow-like protein 9 (SCL9) of Arabidopsis thaliana (Mouse-ear cress).